Consider the following 135-residue polypeptide: L-ectoine synthase (135 aa).

The protein belongs to the ectoine synthase family.

The enzyme catalyses (2S)-4-acetamido-2-aminobutanoate = L-ectoine + H2O. It functions in the pathway amine and polyamine biosynthesis; ectoine biosynthesis; L-ectoine from L-aspartate 4-semialdehyde: step 3/3. In terms of biological role, catalyzes the circularization of gamma-N-acetyl-alpha,gamma-diaminobutyric acid (ADABA) to ectoine (1,4,5,6-tetrahydro-2-methyl-4-pyrimidine carboxylic acid), which is an excellent osmoprotectant. The chain is L-ectoine synthase from Hyphomonas neptunium (strain ATCC 15444).